Reading from the N-terminus, the 435-residue chain is 5-methylthioadenosine/S-adenosylhomocysteine deaminase (435 aa).

2 residues coordinate Zn(2+): histidine 65 and histidine 67. Residues glutamate 94, arginine 150, and histidine 189 each contribute to the substrate site. Residue histidine 216 participates in Zn(2+) binding. Substrate-binding residues include glutamate 219 and aspartate 304. Aspartate 304 serves as a coordination point for Zn(2+).

The protein belongs to the metallo-dependent hydrolases superfamily. MTA/SAH deaminase family. Zn(2+) serves as cofactor.

The enzyme catalyses S-adenosyl-L-homocysteine + H2O + H(+) = S-inosyl-L-homocysteine + NH4(+). The catalysed reaction is S-methyl-5'-thioadenosine + H2O + H(+) = S-methyl-5'-thioinosine + NH4(+). Its function is as follows. Catalyzes the deamination of 5-methylthioadenosine and S-adenosyl-L-homocysteine into 5-methylthioinosine and S-inosyl-L-homocysteine, respectively. Is also able to deaminate adenosine. This chain is 5-methylthioadenosine/S-adenosylhomocysteine deaminase, found in Bacillus cytotoxicus (strain DSM 22905 / CIP 110041 / 391-98 / NVH 391-98).